A 414-amino-acid polypeptide reads, in one-letter code: MKELILKGERAKEASYVLMNATTSEKNDALIKMGQKLLENKEYIIAENKKDLENAMLKGTSKAMLDRLYLDEKRLEDMADGLNQLVNLNDPIGEVITMWKRPNGLQIGKQRVPMGVIGIIYEARPNVTCDAAGLCLKAGNAVILRGGSEAINSNKAIVKALCEGIKESGLPEYSLQLIENTSREIANEMMRLNEYIDVLIPRGGAGLIQAVVKNATVPVIETGVGNCHVYVDEEADFKMAEDIIINAKTSRPAVCNAEEKLLVNEKIAEEFLPKIISALREKNVEVRGDSSVMKIVDDVKEATDEDWGKEYLDFIIGIKIVNNIDEAIKHINKYGSGHSEAIITNNYQNSQKFLQRVDAAAVYVNASTRFTDGCEFGFGAEIGISTQKLHARGPMGLNELTTTKYIIYGNGQIR.

It belongs to the gamma-glutamyl phosphate reductase family.

The protein resides in the cytoplasm. The catalysed reaction is L-glutamate 5-semialdehyde + phosphate + NADP(+) = L-glutamyl 5-phosphate + NADPH + H(+). It functions in the pathway amino-acid biosynthesis; L-proline biosynthesis; L-glutamate 5-semialdehyde from L-glutamate: step 2/2. Functionally, catalyzes the NADPH-dependent reduction of L-glutamate 5-phosphate into L-glutamate 5-semialdehyde and phosphate. The product spontaneously undergoes cyclization to form 1-pyrroline-5-carboxylate. The chain is Gamma-glutamyl phosphate reductase from Clostridium botulinum (strain Eklund 17B / Type B).